A 207-amino-acid chain; its full sequence is ATP-dependent Clp protease proteolytic subunit (207 aa).

The active-site Nucleophile is serine 111. Residue histidine 136 is part of the active site.

Belongs to the peptidase S14 family. Fourteen ClpP subunits assemble into 2 heptameric rings which stack back to back to give a disk-like structure with a central cavity, resembling the structure of eukaryotic proteasomes. Component of the ClpAP and ClpXP complexes.

It localises to the cytoplasm. It catalyses the reaction Hydrolysis of proteins to small peptides in the presence of ATP and magnesium. alpha-casein is the usual test substrate. In the absence of ATP, only oligopeptides shorter than five residues are hydrolyzed (such as succinyl-Leu-Tyr-|-NHMec, and Leu-Tyr-Leu-|-Tyr-Trp, in which cleavage of the -Tyr-|-Leu- and -Tyr-|-Trp bonds also occurs).. In terms of biological role, cleaves peptides in various proteins in a process that requires ATP hydrolysis. Has a chymotrypsin-like activity. Plays a major role in the degradation of misfolded proteins. This chain is ATP-dependent Clp protease proteolytic subunit, found in Escherichia coli O139:H28 (strain E24377A / ETEC).